We begin with the raw amino-acid sequence, 224 residues long: Protein-L-isoaspartate O-methyltransferase (224 aa).

Serine 70 is a catalytic residue.

The protein belongs to the methyltransferase superfamily. L-isoaspartyl/D-aspartyl protein methyltransferase family.

It is found in the cytoplasm. It carries out the reaction [protein]-L-isoaspartate + S-adenosyl-L-methionine = [protein]-L-isoaspartate alpha-methyl ester + S-adenosyl-L-homocysteine. Its function is as follows. Catalyzes the methyl esterification of L-isoaspartyl residues in peptides and proteins that result from spontaneous decomposition of normal L-aspartyl and L-asparaginyl residues. It plays a role in the repair and/or degradation of damaged proteins. The polypeptide is Protein-L-isoaspartate O-methyltransferase (Cellvibrio japonicus (strain Ueda107) (Pseudomonas fluorescens subsp. cellulosa)).